Consider the following 297-residue polypeptide: uncharacterized protein (297 aa).

A run of 6 helical transmembrane segments spans residues 26-48 (FVLH…IYAI), 80-102 (NIEL…AALF), 134-156 (LFKF…INLG), 185-205 (LGIF…AIVI), 225-247 (LVDT…VAAY), and 262-284 (LVAV…VELY).

It localises to the cell membrane. This is an uncharacterized protein from Archaeoglobus fulgidus (strain ATCC 49558 / DSM 4304 / JCM 9628 / NBRC 100126 / VC-16).